The following is a 350-amino-acid chain: Glycerol-1-phosphate dehydrogenase [NAD(P)+] (350 aa).

NAD(+) contacts are provided by residues 97–101 (GSKID) and 119–122 (TTPS). Asp124 contacts substrate. Ser128 is a binding site for NAD(+). Position 171 (Asp171) interacts with substrate. Zn(2+) contacts are provided by Asp171 and His251. His255 lines the substrate pocket. His267 provides a ligand contact to Zn(2+).

Belongs to the glycerol-1-phosphate dehydrogenase family. Requires Zn(2+) as cofactor.

It localises to the cytoplasm. It carries out the reaction sn-glycerol 1-phosphate + NAD(+) = dihydroxyacetone phosphate + NADH + H(+). The enzyme catalyses sn-glycerol 1-phosphate + NADP(+) = dihydroxyacetone phosphate + NADPH + H(+). The protein operates within membrane lipid metabolism; glycerophospholipid metabolism. Catalyzes the NAD(P)H-dependent reduction of dihydroxyacetonephosphate (DHAP or glycerone phosphate) to glycerol 1-phosphate (G1P). The G1P thus generated is used as the glycerophosphate backbone of phospholipids in the cellular membranes of Archaea. This Picrophilus torridus (strain ATCC 700027 / DSM 9790 / JCM 10055 / NBRC 100828 / KAW 2/3) protein is Glycerol-1-phosphate dehydrogenase [NAD(P)+].